Consider the following 403-residue polypeptide: Phosphoglycerate kinase (403 aa).

Substrate-binding positions include D21–N23, R36, H59–R62, R118, and R151. ATP is bound by residues K202, E328, and G354–S357.

The protein belongs to the phosphoglycerate kinase family. Monomer.

It localises to the cytoplasm. The catalysed reaction is (2R)-3-phosphoglycerate + ATP = (2R)-3-phospho-glyceroyl phosphate + ADP. The protein operates within carbohydrate degradation; glycolysis; pyruvate from D-glyceraldehyde 3-phosphate: step 2/5. In Akkermansia muciniphila (strain ATCC BAA-835 / DSM 22959 / JCM 33894 / BCRC 81048 / CCUG 64013 / CIP 107961 / Muc), this protein is Phosphoglycerate kinase.